The following is a 228-amino-acid chain: Thermonuclease (228 aa).

A signal peptide spans 1 to 23; sequence MTEYLLSAGICMAIVSILLIGMA. The propeptide occupies 24 to 60; that stretch reads ISNVSKGQYAKRFFFFATSCLVLTLVVVSSLSSSANA. Position 100 (D100) interacts with Ca(2+). The active site involves R114. Ca(2+) is bound by residues D119 and T120. Active-site residues include E122 and R166.

Belongs to the thermonuclease family. Ca(2+) serves as cofactor.

It localises to the secreted. It catalyses the reaction Endonucleolytic cleavage to nucleoside 3'-phosphates and 3'-phosphooligonucleotide end-products.. Enzyme that catalyzes the hydrolysis of both DNA and RNA at the 5' position of the phosphodiester bond. The chain is Thermonuclease (nuc) from Staphylococcus aureus (strain MSSA476).